Consider the following 396-residue polypeptide: Elongation factor Tu (396 aa).

The tr-type G domain maps to 10–206 (KPHVNVGTIG…ALDSFIPEPT (197 aa)). The G1 stretch occupies residues 19–26 (GHVDHGKT). 19-26 (GHVDHGKT) is a binding site for GTP. Thr26 serves as a coordination point for Mg(2+). A G2 region spans residues 60–64 (GITIS). The G3 stretch occupies residues 81 to 84 (DCPG). Residues 81–85 (DCPGH) and 136–139 (NKAD) each bind GTP. A G4 region spans residues 136-139 (NKAD). A G5 region spans residues 174-176 (SAR).

It belongs to the TRAFAC class translation factor GTPase superfamily. Classic translation factor GTPase family. EF-Tu/EF-1A subfamily. As to quaternary structure, monomer.

The protein localises to the cytoplasm. It carries out the reaction GTP + H2O = GDP + phosphate + H(+). Its function is as follows. GTP hydrolase that promotes the GTP-dependent binding of aminoacyl-tRNA to the A-site of ribosomes during protein biosynthesis. This chain is Elongation factor Tu, found in Xanthomonas euvesicatoria pv. vesicatoria (strain 85-10) (Xanthomonas campestris pv. vesicatoria).